Reading from the N-terminus, the 169-residue chain is Putative adenylate kinase (169 aa).

Positions 10, 12, 13, 14, and 15 each coordinate ATP. Residues 28 to 51 (HLNDLVGTEGLYDGVDADRGSKIV) form an NMP region. The segment at 98–108 (DRGDSPEKAAE) is LID. Arg-99 serves as a coordination point for ATP.

This sequence belongs to the adenylate kinase family. AK6 subfamily. As to quaternary structure, interacts with uS11. Not a structural component of 40S pre-ribosomes, but transiently interacts with them by binding to uS11.

The enzyme catalyses AMP + ATP = 2 ADP. The catalysed reaction is ATP + H2O = ADP + phosphate + H(+). Broad-specificity nucleoside monophosphate (NMP) kinase that catalyzes the reversible transfer of the terminal phosphate group between nucleoside triphosphates and monophosphates. Also has ATPase activity. Involved in the late maturation steps of the 30S ribosomal particles, specifically 16S rRNA maturation. While NMP activity is not required for ribosome maturation, ATPase activity is. Associates transiently with small ribosomal subunit protein uS11. ATP hydrolysis breaks the interaction with uS11. May temporarily remove uS11 from the ribosome to enable a conformational change of the ribosomal RNA that is needed for the final maturation step of the small ribosomal subunit. The protein is Putative adenylate kinase of Halobacterium salinarum (strain ATCC 29341 / DSM 671 / R1).